A 328-amino-acid polypeptide reads, in one-letter code: Malate dehydrogenase (328 aa).

NAD(+) is bound at residue 12–18; that stretch reads GAAGQIG. Residues arginine 93 and arginine 99 each coordinate substrate. NAD(+) is bound by residues asparagine 106, glutamine 113, and 130 to 132; that span reads TGN. Substrate contacts are provided by asparagine 132 and arginine 163. The active-site Proton acceptor is histidine 188.

The protein belongs to the LDH/MDH superfamily. MDH type 2 family.

It carries out the reaction (S)-malate + NAD(+) = oxaloacetate + NADH + H(+). In terms of biological role, catalyzes the reversible oxidation of malate to oxaloacetate. The polypeptide is Malate dehydrogenase (Kocuria rhizophila (strain ATCC 9341 / DSM 348 / NBRC 103217 / DC2201)).